The following is a 580-amino-acid chain: Aspartate--tRNA ligase (580 aa).

Glu-173 provides a ligand contact to L-aspartate. The segment at 195-198 (QIYK) is aspartate. L-aspartate is bound at residue Arg-217. Residues 217-219 (RDE) and Gln-226 contribute to the ATP site. His-443 contributes to the L-aspartate binding site. Glu-477 is an ATP binding site. L-aspartate is bound at residue Arg-484. 529-532 (GIER) is a binding site for ATP.

The protein belongs to the class-II aminoacyl-tRNA synthetase family. Type 1 subfamily. Homodimer.

It is found in the cytoplasm. The catalysed reaction is tRNA(Asp) + L-aspartate + ATP = L-aspartyl-tRNA(Asp) + AMP + diphosphate. Catalyzes the attachment of L-aspartate to tRNA(Asp) in a two-step reaction: L-aspartate is first activated by ATP to form Asp-AMP and then transferred to the acceptor end of tRNA(Asp). In Malacoplasma penetrans (strain HF-2) (Mycoplasma penetrans), this protein is Aspartate--tRNA ligase.